The sequence spans 185 residues: MINEIRKDADSRMEKSVEAFKNQISKIRTGRASPSILDGIMVEYYGASTPLRQLASVTVEDSRTLKINVFDRSISAAVEKAIMSSDLGLNPSSAGSDIRVPLPALTEERRKDLIKIVRNEAEQGRVAVRNVRRDANDKVKALLKDKEISEDEDRRSQDDVQKLTDAYIKLLDAALADKEKELMEF.

The protein belongs to the RRF family.

It is found in the cytoplasm. Its function is as follows. Responsible for the release of ribosomes from messenger RNA at the termination of protein biosynthesis. May increase the efficiency of translation by recycling ribosomes from one round of translation to another. The chain is Ribosome-recycling factor from Serratia proteamaculans (strain 568).